Reading from the N-terminus, the 590-residue chain is MASEIHMTGPMCLIENTNGRLMVNPEALKILSAITQPVVVVAIVGLYRTGKSYLMNKLAGKKKGFSLGSTVQSHTKGIWMWCVPHPKKPGHVLVLLDTEGLGDVEKGDNQNDSWIFALAILLSSTFVYNSMGTINQQAMDQLHYVTELTHRIRSKSSPDENENEDSADFVSFFPDFVWTLRDFSLDLEADGQPITADEYLTYSLKLKKGTSEKDKTFNLPRLCIRKFFPKKKCFVFDRPVHRKKLAQLEKLHDEELDPEFVQQVADFCSYIFSNSKTKTLSGGIKVNGPRLESLVLTYVNAISSGDLPCMENAVLALAQIENSAAVQKAVAHYEQQMGQKVQLPTETLQELLDLHRDSEREAIEVFIRSSFKDVDHLFQKELAAQLEKKRDDFCKQNQEASSDRCSALLQDIFSPLEEEVKMGIYSKPGGYRLFIQKLQDLKKKYYEEPRKGIQAEEILQTYLKSKESMTDAILQTDQTLTEKEKEIEVERVKAESAQASTKMLQEIQRKNEQMMEQKERSYQEHLKQLTEKMERDRAQLLKEQERTLALKLQEQERLLKEGFQTESRKMQNEIQDLQKKMRQRRTCTIS.

The interval Met1–Cys309 is GTPase domain (Globular). The GB1/RHD3-type G domain occupies Thr35–Lys276. Residues Gly45–Ser52, Leu67–Ser69, and Asp97–Leu101 contribute to the GTP site. Ser156 bears the Phosphoserine mark. Cys587 is modified (cysteine methyl ester). The S-farnesyl cysteine moiety is linked to residue Cys587. Thr588 carries the phosphothreonine modification. Positions Thr588–Ser590 are cleaved as a propeptide — removed in mature form.

Belongs to the TRAFAC class dynamin-like GTPase superfamily. GB1/RHD3 GTPase family. GB1 subfamily. Homodimer; homodimerization occurs upon GTP-binding and is required for the second hydrolysis step from GDP to GMP. Undergoes conformational changes and oligomerization upon GTP-binding and hydrolysis. Heterodimer with other family members, including GBP2, GBP3, GBP4 and GBP5. Dimerization regulates subcellular location to membranous structures. Interacts with SQSTM1. Interacts (when phosphorylated) with 14-3-3 protein sigma (SFN); leading to GBP1 retention in the cytosol and inactivation. Isoprenylation is required for proper subcellular location. In terms of processing, phosphorylated at Ser-156 by PIM1 in absence of infection, inhibits GBP1: phosphorylation promotes interaction with 14-3-3 protein sigma (SFN), leading to GBP1 retention in the cytosol. Dephosphorylated in response to infection, liberating GBP1.

It localises to the cytoplasmic vesicle membrane. It is found in the golgi apparatus membrane. The protein resides in the cell membrane. Its subcellular location is the cytoplasm. The protein localises to the cytosol. It localises to the secreted. It catalyses the reaction GTP + H2O = GDP + phosphate + H(+). The catalysed reaction is GDP + H2O = GMP + phosphate + H(+). Interferon (IFN)-inducible GTPase that plays important roles in innate immunity against a diverse range of bacterial, viral and protozoan pathogens. Hydrolyzes GTP to GMP in two consecutive cleavage reactions: GTP is first hydrolyzed to GDP and then to GMP in a processive manner. Following infection, recruited to the pathogen-containing vacuoles or vacuole-escaped bacteria and promotes both inflammasome assembly and autophagy. Acts as a positive regulator of inflammasome assembly by facilitating the detection of inflammasome ligands from pathogens. Involved in the lysis of pathogen-containing vacuoles, releasing pathogens into the cytosol. Following pathogen release in the cytosol, forms a protein coat in a GTPase-dependent manner that encapsulates pathogens and promotes the detection of ligands by pattern recognition receptors. Plays a key role in inflammasome assembly in response to infection by Gram-negative bacteria: following pathogen release in the cytosol, forms a protein coat that encapsulates Gram-negative bacteria and directly binds to lipopolysaccharide (LPS), disrupting the O-antigen barrier and unmasking lipid A that is that detected by the non-canonical inflammasome effector CASP4/CASP11. Also promotes recruitment of proteins that mediate bacterial cytolysis, leading to release double-stranded DNA (dsDNA) that activates the AIM2 inflammasome. Involved in autophagy by regulating bacteriolytic peptide generation via its interaction with ubiquitin-binding protein SQSTM1, which delivers monoubiquitinated proteins to autolysosomes for the generation of bacteriolytic peptides. Confers protection to several pathogens, including the bacterial pathogens L.monocytogenes and M.bovis BCG as well as the protozoan pathogen T.gondii. Exhibits antiviral activity against influenza virus. In Chlorocebus aethiops (Green monkey), this protein is Guanylate-binding protein 1 (GBP1).